We begin with the raw amino-acid sequence, 248 residues long: Metallo-beta-lactamase type 2 (248 aa).

The N-terminal stretch at 1-21 (MKRLKGLLVLALGFTGLQVFG) is a signal peptide. Zn(2+) is bound by residues His97, His99, Asp101, His160, and Cys179. Lys182 is a substrate binding site. Position 221 (His221) interacts with Zn(2+).

Belongs to the metallo-beta-lactamase superfamily. Class-B beta-lactamase family. Monomer. It depends on Zn(2+) as a cofactor.

Its subcellular location is the periplasm. The catalysed reaction is a beta-lactam + H2O = a substituted beta-amino acid. Functionally, confers resistance to the different beta-lactams antibiotics (penicillin, cephalosporin and carbapenem) via the hydrolysis of the beta-lactam ring. The sequence is that of Metallo-beta-lactamase type 2 (blaB6) from Elizabethkingia meningoseptica (Chryseobacterium meningosepticum).